The following is a 248-amino-acid chain: PF03932 family protein CutC (248 aa).

The protein belongs to the CutC family. As to quaternary structure, homodimer.

It localises to the cytoplasm. The polypeptide is PF03932 family protein CutC (Salmonella paratyphi B (strain ATCC BAA-1250 / SPB7)).